A 228-amino-acid polypeptide reads, in one-letter code: Cytochrome c oxidase subunit 2 (228 aa).

At 1-26 (MSTWANLGLQDSASPLMEQLIFFHDH) the chain is on the mitochondrial intermembrane side. A helical transmembrane segment spans residues 27–48 (ALLILVMITVLVGYLMFMLFFN). The Mitochondrial matrix portion of the chain corresponds to 49–62 (NYVNRFLLHGQLIE). Residues 63–82 (MIWTILPAIILLFIALPSLR) form a helical membrane-spanning segment. The Mitochondrial intermembrane segment spans residues 83–228 (LLYLLDEINE…FIKWISSNNS (146 aa)). Residues His161, Cys196, Glu198, Cys200, His204, and Met207 each contribute to the Cu cation site. Residue Glu198 participates in Mg(2+) binding.

This sequence belongs to the cytochrome c oxidase subunit 2 family. As to quaternary structure, component of the cytochrome c oxidase (complex IV, CIV), a multisubunit enzyme composed of a catalytic core of 3 subunits and several supernumerary subunits. The complex exists as a monomer or a dimer and forms supercomplexes (SCs) in the inner mitochondrial membrane with ubiquinol-cytochrome c oxidoreductase (cytochrome b-c1 complex, complex III, CIII). It depends on Cu cation as a cofactor.

The protein resides in the mitochondrion inner membrane. It carries out the reaction 4 Fe(II)-[cytochrome c] + O2 + 8 H(+)(in) = 4 Fe(III)-[cytochrome c] + 2 H2O + 4 H(+)(out). Component of the cytochrome c oxidase, the last enzyme in the mitochondrial electron transport chain which drives oxidative phosphorylation. The respiratory chain contains 3 multisubunit complexes succinate dehydrogenase (complex II, CII), ubiquinol-cytochrome c oxidoreductase (cytochrome b-c1 complex, complex III, CIII) and cytochrome c oxidase (complex IV, CIV), that cooperate to transfer electrons derived from NADH and succinate to molecular oxygen, creating an electrochemical gradient over the inner membrane that drives transmembrane transport and the ATP synthase. Cytochrome c oxidase is the component of the respiratory chain that catalyzes the reduction of oxygen to water. Electrons originating from reduced cytochrome c in the intermembrane space (IMS) are transferred via the dinuclear copper A center (CU(A)) of subunit 2 and heme A of subunit 1 to the active site in subunit 1, a binuclear center (BNC) formed by heme A3 and copper B (CU(B)). The BNC reduces molecular oxygen to 2 water molecules using 4 electrons from cytochrome c in the IMS and 4 protons from the mitochondrial matrix. The polypeptide is Cytochrome c oxidase subunit 2 (mt:CoII) (Drosophila melanogaster (Fruit fly)).